Consider the following 559-residue polypeptide: MRWIVASAWPYINAVPHLGTLVQVLSSDVFARFLRKMGEEVVFVSGSDEHGTPIEIEAIRKGIAPRDLTDKMHAYITWLFESFGISYDNYTRTESDVHKEFVRDFYLKVYNEGHIFERETEQLYCPKDEMFLPDRFVTGTCPYCGYERAHGDQCDRCGRLLNPTDLIDPKCSICGSVPEMRRTKHWFFDLPKFSERLRKYIEENENLPENAKTLSLSMIEEGLRPRSLTRDNKWGIPAPFPGSEGKTIYVWMEAVLGYVSAVKEYFLKRGEAERFEEFWKSGDTRSVYFIGKDNIPFHTIIFPALLMASGEGYALPFSVASTEFLLYEGEKFSKSERRGIWMDEALQLLPADYWRFYMIYMRPELKDASFSWEDFESKVNDELNDTIGNLVHRILSFIASRYSGQIPSVELDEEASGFLMRVREIGREIEENLMKIKLRDALRSLIEMARLGNKFFNNREPWKDFESNRGRADSTILASYILLKILAFYMHIFMPSSAEKLWKMLGLEGEPEDRVAFSYHDNGKVSSLEPLFRKIKKEELINRLNQIRERGEVLSARES.

The 'HIGH' region motif lies at 10 to 20 (PYINAVPHLGT). Zn(2+) is bound by residues Cys141, Cys144, Cys154, and Cys157. The 'KMSKS' region motif lies at 331–335 (KFSKS). Lys334 contributes to the ATP binding site.

It belongs to the class-I aminoacyl-tRNA synthetase family. MetG type 1 subfamily. Zn(2+) is required as a cofactor.

It is found in the cytoplasm. It carries out the reaction tRNA(Met) + L-methionine + ATP = L-methionyl-tRNA(Met) + AMP + diphosphate. Its function is as follows. Is required not only for elongation of protein synthesis but also for the initiation of all mRNA translation through initiator tRNA(fMet) aminoacylation. This is Methionine--tRNA ligase from Korarchaeum cryptofilum (strain OPF8).